The primary structure comprises 234 residues: Phosphoribosylaminoimidazole-succinocarboxamide synthase (234 aa).

It belongs to the SAICAR synthetase family.

It catalyses the reaction 5-amino-1-(5-phospho-D-ribosyl)imidazole-4-carboxylate + L-aspartate + ATP = (2S)-2-[5-amino-1-(5-phospho-beta-D-ribosyl)imidazole-4-carboxamido]succinate + ADP + phosphate + 2 H(+). It participates in purine metabolism; IMP biosynthesis via de novo pathway; 5-amino-1-(5-phospho-D-ribosyl)imidazole-4-carboxamide from 5-amino-1-(5-phospho-D-ribosyl)imidazole-4-carboxylate: step 1/2. The polypeptide is Phosphoribosylaminoimidazole-succinocarboxamide synthase (Clostridium botulinum (strain Langeland / NCTC 10281 / Type F)).